A 320-amino-acid chain; its full sequence is Tabersonine synthase (320 aa).

An Involved in the stabilization of the negatively charged intermediate by the formation of the oxyanion hole motif is present at residues 78-80; that stretch reads HGA. Gly-81 contributes to the (-)-tabersonine binding site. The active-site Proton acceptor is Ser-170. Residue Asp-266 is part of the active site. Tyr-297 is a binding site for (-)-tabersonine. Tyr-297 serves as the catalytic Proton donor/acceptor.

Belongs to the 'GDXG' lipolytic enzyme family. As to quaternary structure, interacts with dehydroprecondylocarpine acetate synthase (DPAS). Expressed in leaf epidermis.

The protein resides in the cytoplasm. It is found in the cytosol. The protein localises to the nucleus. The enzyme catalyses dehydrosecodine = (-)-tabersonine. It carries out the reaction dihydroprecondylocarpine acetate = (-)-tabersonine + acetate + H(+). The protein operates within alkaloid biosynthesis. In terms of biological role, component of iboga and aspidosperma monoterpenoid indole alkaloids (MIAs, e.g. tabersonine and catharanthine) biosynthesis pathway from 19E-geissoschizine, psychoactive compounds likely to be used in the treatment of opioid dependence. Catalyzes the conversion of dehydrosecodine to tabersonine, a precursor of vindoline; this process starts with the conversion of dihydroprecondylocarpine acetate to dehydrosecodine. This Catharanthus roseus (Madagascar periwinkle) protein is Tabersonine synthase.